A 190-amino-acid chain; its full sequence is Adenine phosphoribosyltransferase (190 aa).

The protein belongs to the purine/pyrimidine phosphoribosyltransferase family. Homodimer.

It localises to the cytoplasm. The catalysed reaction is AMP + diphosphate = 5-phospho-alpha-D-ribose 1-diphosphate + adenine. Its pathway is purine metabolism; AMP biosynthesis via salvage pathway; AMP from adenine: step 1/1. Its function is as follows. Catalyzes a salvage reaction resulting in the formation of AMP, that is energically less costly than de novo synthesis. This chain is Adenine phosphoribosyltransferase, found in Treponema denticola (strain ATCC 35405 / DSM 14222 / CIP 103919 / JCM 8153 / KCTC 15104).